The chain runs to 317 residues: Beta-ketoacyl-[acyl-carrier-protein] synthase III (317 aa).

Residues cysteine 112 and histidine 244 contribute to the active site. The interval 245-249 (QANLR) is ACP-binding. The active site involves asparagine 274.

It belongs to the thiolase-like superfamily. FabH family. In terms of assembly, homodimer.

The protein localises to the cytoplasm. The enzyme catalyses malonyl-[ACP] + acetyl-CoA + H(+) = 3-oxobutanoyl-[ACP] + CO2 + CoA. Its pathway is lipid metabolism; fatty acid biosynthesis. Its function is as follows. Catalyzes the condensation reaction of fatty acid synthesis by the addition to an acyl acceptor of two carbons from malonyl-ACP. Catalyzes the first condensation reaction which initiates fatty acid synthesis and may therefore play a role in governing the total rate of fatty acid production. Possesses both acetoacetyl-ACP synthase and acetyl transacylase activities. Its substrate specificity determines the biosynthesis of branched-chain and/or straight-chain of fatty acids. The chain is Beta-ketoacyl-[acyl-carrier-protein] synthase III from Salmonella typhi.